The following is a 304-amino-acid chain: Putative S-adenosyl-L-methionine-dependent methyltransferase MAV_4236 (304 aa).

S-adenosyl-L-methionine is bound by residues D129 and 158–159 (DL).

This sequence belongs to the UPF0677 family.

Functionally, exhibits S-adenosyl-L-methionine-dependent methyltransferase activity. The polypeptide is Putative S-adenosyl-L-methionine-dependent methyltransferase MAV_4236 (Mycobacterium avium (strain 104)).